We begin with the raw amino-acid sequence, 199 residues long: Recombination protein RecR (199 aa).

The segment at 58 to 73 adopts a C4-type zinc-finger fold; it reads CSVCNNITDVDPCVFC. The 96-residue stretch at 81–176 folds into the Toprim domain; the sequence is RLVCVVEEPT…RLTRIATGVP (96 aa).

It belongs to the RecR family.

Functionally, may play a role in DNA repair. It seems to be involved in an RecBC-independent recombinational process of DNA repair. It may act with RecF and RecO. In Acidobacterium capsulatum (strain ATCC 51196 / DSM 11244 / BCRC 80197 / JCM 7670 / NBRC 15755 / NCIMB 13165 / 161), this protein is Recombination protein RecR.